The following is a 436-amino-acid chain: Enolase (436 aa).

Gln167 provides a ligand contact to (2R)-2-phosphoglycerate. Glu209 functions as the Proton donor in the catalytic mechanism. The Mg(2+) site is built by Asp246, Glu291, and Asp318. Lys343, Arg372, Ser373, and Lys394 together coordinate (2R)-2-phosphoglycerate. The active-site Proton acceptor is Lys343.

Belongs to the enolase family. As to quaternary structure, component of the RNA degradosome, a multiprotein complex involved in RNA processing and mRNA degradation. Mg(2+) is required as a cofactor.

Its subcellular location is the cytoplasm. It is found in the secreted. The protein localises to the cell surface. The enzyme catalyses (2R)-2-phosphoglycerate = phosphoenolpyruvate + H2O. It functions in the pathway carbohydrate degradation; glycolysis; pyruvate from D-glyceraldehyde 3-phosphate: step 4/5. Catalyzes the reversible conversion of 2-phosphoglycerate (2-PG) into phosphoenolpyruvate (PEP). It is essential for the degradation of carbohydrates via glycolysis. This chain is Enolase, found in Haemophilus influenzae (strain ATCC 51907 / DSM 11121 / KW20 / Rd).